The primary structure comprises 402 residues: Diaminopimelate decarboxylase (402 aa).

Residue lysine 61 is modified to N6-(pyridoxal phosphate)lysine. Residues glycine 233 and 269–272 (EPGR) each bind pyridoxal 5'-phosphate. Positions 272, 304, 308, 334, and 360 each coordinate substrate. Position 360 (tyrosine 360) interacts with pyridoxal 5'-phosphate.

Belongs to the Orn/Lys/Arg decarboxylase class-II family. LysA subfamily. In terms of assembly, homodimer. Pyridoxal 5'-phosphate is required as a cofactor.

The catalysed reaction is meso-2,6-diaminopimelate + H(+) = L-lysine + CO2. It participates in amino-acid biosynthesis; L-lysine biosynthesis via DAP pathway; L-lysine from DL-2,6-diaminopimelate: step 1/1. In terms of biological role, specifically catalyzes the decarboxylation of meso-diaminopimelate (meso-DAP) to L-lysine. In Thermoplasma acidophilum (strain ATCC 25905 / DSM 1728 / JCM 9062 / NBRC 15155 / AMRC-C165), this protein is Diaminopimelate decarboxylase.